The sequence spans 522 residues: 2-isopropylmalate synthase (522 aa).

Residues 5–267 form the Pyruvate carboxyltransferase domain; the sequence is VIIFDTTLRD…ETGINAKEIH (263 aa). Mn(2+) is bound by residues aspartate 14, histidine 202, histidine 204, and asparagine 238. Positions 392-522 are regulatory domain; sequence QLQQLVVQSD…MQKNRELGGV (131 aa).

This sequence belongs to the alpha-IPM synthase/homocitrate synthase family. LeuA type 1 subfamily. As to quaternary structure, homodimer. The cofactor is Mn(2+).

It localises to the cytoplasm. The enzyme catalyses 3-methyl-2-oxobutanoate + acetyl-CoA + H2O = (2S)-2-isopropylmalate + CoA + H(+). It participates in amino-acid biosynthesis; L-leucine biosynthesis; L-leucine from 3-methyl-2-oxobutanoate: step 1/4. Functionally, catalyzes the condensation of the acetyl group of acetyl-CoA with 3-methyl-2-oxobutanoate (2-ketoisovalerate) to form 3-carboxy-3-hydroxy-4-methylpentanoate (2-isopropylmalate). This Shewanella putrefaciens (strain CN-32 / ATCC BAA-453) protein is 2-isopropylmalate synthase.